The sequence spans 93 residues: Small ribosomal subunit protein uS19c (93 aa).

This sequence belongs to the universal ribosomal protein uS19 family.

The protein localises to the plastid. It localises to the chloroplast. Protein S19 forms a complex with S13 that binds strongly to the 16S ribosomal RNA. The protein is Small ribosomal subunit protein uS19c of Oryza nivara (Indian wild rice).